The following is a 154-amino-acid chain: Ribonuclease 8 (154 aa).

Positions 1-27 (MAPARAGCCPLLLLLLGLWVAEVLVRA) are cleaved as a signal peptide. The active-site Proton acceptor is the histidine 42. Disulfide bonds link cysteine 50-cysteine 93, cysteine 64-cysteine 118, cysteine 82-cysteine 133, and cysteine 89-cysteine 96. Residues 65 to 69 (KDLNT) and lysine 90 each bind substrate. The Proton donor role is filled by histidine 149.

Belongs to the pancreatic ribonuclease family. As to expression, expressed prominently in the placenta and is not detected in any other tissues examined.

Its subcellular location is the secreted. Its function is as follows. Has a low ribonuclease activity. This is Ribonuclease 8 (RNASE8) from Homo sapiens (Human).